Reading from the N-terminus, the 109-residue chain is Nucleoid-associated protein HI_0442 (109 aa).

This sequence belongs to the YbaB/EbfC family. Homodimer.

The protein resides in the cytoplasm. The protein localises to the nucleoid. Functionally, binds to DNA and alters its conformation. May be involved in regulation of gene expression, nucleoid organization and DNA protection. The sequence is that of Nucleoid-associated protein HI_0442 from Haemophilus influenzae (strain ATCC 51907 / DSM 11121 / KW20 / Rd).